The chain runs to 466 residues: UDP-N-acetylmuramoylalanine--D-glutamate ligase (466 aa).

Residue glycine 122–threonine 128 participates in ATP binding.

This sequence belongs to the MurCDEF family.

It localises to the cytoplasm. The enzyme catalyses UDP-N-acetyl-alpha-D-muramoyl-L-alanine + D-glutamate + ATP = UDP-N-acetyl-alpha-D-muramoyl-L-alanyl-D-glutamate + ADP + phosphate + H(+). The protein operates within cell wall biogenesis; peptidoglycan biosynthesis. Functionally, cell wall formation. Catalyzes the addition of glutamate to the nucleotide precursor UDP-N-acetylmuramoyl-L-alanine (UMA). In Aromatoleum aromaticum (strain DSM 19018 / LMG 30748 / EbN1) (Azoarcus sp. (strain EbN1)), this protein is UDP-N-acetylmuramoylalanine--D-glutamate ligase.